We begin with the raw amino-acid sequence, 196 residues long: Nucleotide kinase gp1.7 (196 aa).

The segment at 97 to 118 is disordered; the sequence is PRKPHLNKPEVTPTDDQPSAET.

As to quaternary structure, dodecamer.

The catalysed reaction is dGMP + ATP = dGDP + ADP. It catalyses the reaction dTMP + ATP = dTDP + ADP. In terms of biological role, nucleotide kinase that catalyzes the phosphorylation of dGMP and dTMP to dGDP and dTDP. A double mutation in this protein and the RecBCD inhibitor gp5.9 protein allow phage to overcome the retron Ec48 bacteriophage defense system. This protein alone when overexpressed in E.coli does not cause growth arrest; Y128C may be a silent mutation. The polypeptide is Nucleotide kinase gp1.7 (Escherichia coli (Bacteriophage T7)).